The chain runs to 452 residues: Probable cytosolic iron-sulfur protein assembly protein 1 (452 aa).

Positions 1–12 are enriched in pro residues; the sequence is MPPPTTPTPNPS. A disordered region spans residues 1 to 24; the sequence is MPPPTTPTPNPSIPQKATLTPLPP. WD repeat units follow at residues 70-121, 161-200, 213-267, 273-319, 340-379, and 411-452; these read GHAR…DAAA, GHENEVKSLAFSPGGQYLATSSRDKSVWIWEDVSSGQGGD, EHDG…EWVC, GHGG…FGGV, VHTRDVYSVSWSADTGLVASTGSDGIIAVYAEESAPEDVA, and YEVN…VRIS.

It belongs to the WD repeat CIA1 family.

Essential component of the cytosolic iron-sulfur (Fe/S) protein assembly machinery. Required for the maturation of extramitochondrial Fe/S proteins. This chain is Probable cytosolic iron-sulfur protein assembly protein 1, found in Chaetomium globosum (strain ATCC 6205 / CBS 148.51 / DSM 1962 / NBRC 6347 / NRRL 1970) (Soil fungus).